Here is a 103-residue protein sequence, read N- to C-terminus: MAAISINVSTVKPLGDRVFVKVSPSEEKTAGGILLPDTAKEKPQLGEVVAVGPGKRNDDGSRSPIEVKVGDKVLYSKYAGTDIKLGGEDYVLLSEKDILAGVA.

The protein belongs to the GroES chaperonin family. As to quaternary structure, heptamer of 7 subunits arranged in a ring. Interacts with the chaperonin GroEL.

The protein resides in the cytoplasm. Functionally, together with the chaperonin GroEL, plays an essential role in assisting protein folding. The GroEL-GroES system forms a nano-cage that allows encapsulation of the non-native substrate proteins and provides a physical environment optimized to promote and accelerate protein folding. GroES binds to the apical surface of the GroEL ring, thereby capping the opening of the GroEL channel. This chain is Co-chaperonin GroES, found in Gloeothece citriformis (strain PCC 7424) (Cyanothece sp. (strain PCC 7424)).